The following is a 159-amino-acid chain: Ribosomal RNA large subunit methyltransferase H (159 aa).

Residues Leu-76, Gly-108, and 127-132 (FSKMTF) contribute to the S-adenosyl-L-methionine site.

This sequence belongs to the RNA methyltransferase RlmH family. In terms of assembly, homodimer.

It localises to the cytoplasm. It carries out the reaction pseudouridine(1915) in 23S rRNA + S-adenosyl-L-methionine = N(3)-methylpseudouridine(1915) in 23S rRNA + S-adenosyl-L-homocysteine + H(+). Its function is as follows. Specifically methylates the pseudouridine at position 1915 (m3Psi1915) in 23S rRNA. The chain is Ribosomal RNA large subunit methyltransferase H from Geobacillus sp. (strain WCH70).